The chain runs to 367 residues: Glutamate 5-kinase (367 aa).

Lys10 lines the ATP pocket. The substrate site is built by Ser50, Asp137, and Asn149. Residues 169–170 (TD) and 211–217 (TGGMGTK) each bind ATP. Residues 275 to 353 (AGEITVDEGA…QQIDAILGYE (79 aa)) enclose the PUA domain.

Belongs to the glutamate 5-kinase family.

It localises to the cytoplasm. The catalysed reaction is L-glutamate + ATP = L-glutamyl 5-phosphate + ADP. It participates in amino-acid biosynthesis; L-proline biosynthesis; L-glutamate 5-semialdehyde from L-glutamate: step 1/2. In terms of biological role, catalyzes the transfer of a phosphate group to glutamate to form L-glutamate 5-phosphate. The sequence is that of Glutamate 5-kinase from Enterobacter sp. (strain 638).